We begin with the raw amino-acid sequence, 595 residues long: Aspartate--tRNA(Asp/Asn) ligase (595 aa).

Glutamate 175 lines the L-aspartate pocket. Residues 199–202 are aspartate; it reads QQYK. Residues arginine 221 and histidine 454 each contribute to the L-aspartate site. 221–223 is an ATP binding site; it reads RDE. Glutamate 488 is an ATP binding site. Arginine 495 contributes to the L-aspartate binding site. 540–543 provides a ligand contact to ATP; sequence GIDR.

Belongs to the class-II aminoacyl-tRNA synthetase family. Type 1 subfamily. Homodimer.

It localises to the cytoplasm. It catalyses the reaction tRNA(Asx) + L-aspartate + ATP = L-aspartyl-tRNA(Asx) + AMP + diphosphate. Its function is as follows. Aspartyl-tRNA synthetase with relaxed tRNA specificity since it is able to aspartylate not only its cognate tRNA(Asp) but also tRNA(Asn). Reaction proceeds in two steps: L-aspartate is first activated by ATP to form Asp-AMP and then transferred to the acceptor end of tRNA(Asp/Asn). This Brucella anthropi (strain ATCC 49188 / DSM 6882 / CCUG 24695 / JCM 21032 / LMG 3331 / NBRC 15819 / NCTC 12168 / Alc 37) (Ochrobactrum anthropi) protein is Aspartate--tRNA(Asp/Asn) ligase.